The following is a 1361-amino-acid chain: uncharacterized protein (1361 aa).

This sequence belongs to the IIV-6 261R/396L/443R family.

This is an uncharacterized protein from Invertebrate iridescent virus 6 (IIV-6).